Reading from the N-terminus, the 336-residue chain is tRNA N6-adenosine threonylcarbamoyltransferase (336 aa).

The Fe cation site is built by His-112 and His-116. Substrate-binding positions include Leu-136–Gly-140, Asp-169, Gly-182, and Asn-276. Residue Asp-304 participates in Fe cation binding.

It belongs to the KAE1 / TsaD family. Fe(2+) is required as a cofactor.

It is found in the cytoplasm. It catalyses the reaction L-threonylcarbamoyladenylate + adenosine(37) in tRNA = N(6)-L-threonylcarbamoyladenosine(37) in tRNA + AMP + H(+). Its function is as follows. Required for the formation of a threonylcarbamoyl group on adenosine at position 37 (t(6)A37) in tRNAs that read codons beginning with adenine. Is involved in the transfer of the threonylcarbamoyl moiety of threonylcarbamoyl-AMP (TC-AMP) to the N6 group of A37, together with TsaE and TsaB. TsaD likely plays a direct catalytic role in this reaction. The protein is tRNA N6-adenosine threonylcarbamoyltransferase of Francisella tularensis subsp. tularensis (strain FSC 198).